The chain runs to 302 residues: Ribose-5-phosphate isomerase (302 aa).

The protein belongs to the ribose 5-phosphate isomerase family.

Its subcellular location is the cytoplasm. The catalysed reaction is aldehydo-D-ribose 5-phosphate = D-ribulose 5-phosphate. It functions in the pathway carbohydrate degradation; pentose phosphate pathway; D-ribose 5-phosphate from D-ribulose 5-phosphate (non-oxidative stage): step 1/1. This chain is Ribose-5-phosphate isomerase (RKI1), found in Cryptococcus neoformans var. neoformans serotype D (strain B-3501A) (Filobasidiella neoformans).